Reading from the N-terminus, the 247-residue chain is Probable transcriptional regulatory protein LBF_0056 (247 aa).

It belongs to the TACO1 family.

Its subcellular location is the cytoplasm. This chain is Probable transcriptional regulatory protein LBF_0056, found in Leptospira biflexa serovar Patoc (strain Patoc 1 / Ames).